An 86-amino-acid polypeptide reads, in one-letter code: Small ribosomal subunit protein bS20 (86 aa).

The protein belongs to the bacterial ribosomal protein bS20 family.

Its function is as follows. Binds directly to 16S ribosomal RNA. This chain is Small ribosomal subunit protein bS20, found in Buchnera aphidicola subsp. Cinara cedri (strain Cc).